The primary structure comprises 376 residues: NAD(P)H-quinone oxidoreductase subunit 1, chloroplastic (376 aa).

9 helical membrane passes run 27–47, 65–85, 97–117, 130–150, 166–186, 251–271, 272–292, 310–330, and 353–373; these read LISIFLPIVLLLVISVLGVLV, PEYAGSLGIMQAIVDGVKLLI, WLFSIGPVLVVTPVILSYLVV, LGIFFWIVISSITPLGLLIAG, AAQSISYEIPLTLCVLSISLL, GIKFGIFYVASYLNLLVSSLF, AVVLYLGGWNFPIPTTLIFFI, LIIPIIHISITLAKTYLFIFF, and FLLPMAVGNLLLTASFQLTLF.

The protein belongs to the complex I subunit 1 family. NDH is composed of at least 16 different subunits, 5 of which are encoded in the nucleus.

It localises to the plastid. Its subcellular location is the chloroplast thylakoid membrane. The enzyme catalyses a plastoquinone + NADH + (n+1) H(+)(in) = a plastoquinol + NAD(+) + n H(+)(out). The catalysed reaction is a plastoquinone + NADPH + (n+1) H(+)(in) = a plastoquinol + NADP(+) + n H(+)(out). Functionally, NDH shuttles electrons from NAD(P)H:plastoquinone, via FMN and iron-sulfur (Fe-S) centers, to quinones in the photosynthetic chain and possibly in a chloroplast respiratory chain. The immediate electron acceptor for the enzyme in this species is believed to be plastoquinone. Couples the redox reaction to proton translocation, and thus conserves the redox energy in a proton gradient. This Chara vulgaris (Common stonewort) protein is NAD(P)H-quinone oxidoreductase subunit 1, chloroplastic.